We begin with the raw amino-acid sequence, 464 residues long: Flavin-containing monooxygenase FMO GS-OX-like 7 (464 aa).

FAD is bound at residue 18–23 (GAGAAG). 214–219 (GSSVSG) contacts NADP(+).

Belongs to the FMO family. FAD serves as cofactor.

In terms of biological role, catalyzes the conversion of methylthioalkyl glucosinolates of any chain length into methylsulfinylalkyl glucosinolates. The sequence is that of Flavin-containing monooxygenase FMO GS-OX-like 7 from Arabidopsis thaliana (Mouse-ear cress).